Reading from the N-terminus, the 309-residue chain is Malate dehydrogenase (309 aa).

Residues 7 to 12 (GAGHVG) and aspartate 32 contribute to the NAD(+) site. Substrate is bound by residues arginine 81 and arginine 87. Residues asparagine 94 and 117–119 (VSN) contribute to the NAD(+) site. Residues asparagine 119 and arginine 150 each contribute to the substrate site. Residue histidine 174 is the Proton acceptor of the active site.

It belongs to the LDH/MDH superfamily. MDH type 3 family.

The catalysed reaction is (S)-malate + NAD(+) = oxaloacetate + NADH + H(+). In terms of biological role, catalyzes the reversible oxidation of malate to oxaloacetate. This chain is Malate dehydrogenase, found in Chlorobium phaeovibrioides (strain DSM 265 / 1930) (Prosthecochloris vibrioformis (strain DSM 265)).